The following is a 928-amino-acid chain: MALLITVVTCFMIILDTSQSCHTPDDFVAITSPGHIMIGGLFAIHEKMLSSDDHPRRPQIQKCAGFEISVFLQTLAMIHSIEMINNSTLLSGVKLGYEIYDTCTEVTAAMAATLRFLSKFNCSRETVVFQCDYSSYMPRVKAVIGAGYSETSIAVSRMLNLQLMPQVSYESTAEILSDKIRFPSFLRTVPSDFYQTKAMAHLIRQSGWNWIGAITTDDDYGRLALNTFAIQAAENNVCIAFKEVLPAFLSDNTIEVRINQTLEKIIAEAQVNVIVVFLRKFHVFNLFTKAIERKISKIWIASDNWSTATKIITIPNVKKLGKVVGFAFRRGNTSSFHSFLQTLHMYPNDNNKPLHEFAMLVSACKYIKDGDLSQCISNYSQATLTYDTTKTIENHLFKRNDFLWHYTEPGLIYSIQLAVFALGHAIRDLCQARDCKKPNAFQPWELLAVLKNVTFTDGRNSFHFDAHGDLNTGYDVVLWKETNGLMTVTKMAEYDLQRDVFITTNQETKHEFRKLKQILSKCSKECSPGQMKKATGSQHSCCYECVSCPENHYSNETDMDHCLLCNNETHWAPVRSTTCFEKEVEYLDWDDSLALLLIALSLLGIAFVLAIGIIFTRNLKTPVVKSSGGLVVCYVMLICHALNFASTGFFIGEPQDFACKTRQTLFGVSFTLCVSCILTKSLKILLAFSFDPKLTMFLKCLYRPVPIVLTCTGIQVVICTLWLVLAAPSVEENISLPRVIILECEEGSALAFGTMLGYITVLAFICFVFAFKGRKLPENYNEAKFLTFGMLIYFIAWITFIPVYTTTFGKYLPAVEIIVILISNYGILCCIFFPKCYIILCKQKTNTKSAFLQMVYNYSAHSVDSLALSHVSLDSTSYDTATTNQSPGNKMTACQNDNHLPAQVLPHTGTAKTIKASKTLRQKRSSSI.

The first 20 residues, 1–20 (MALLITVVTCFMIILDTSQS), serve as a signal peptide directing secretion. The Extracellular segment spans residues 21-594 (CHTPDDFVAI…EYLDWDDSLA (574 aa)). Residues N332, N555, and N567 are each glycosylated (N-linked (GlcNAc...) asparagine). A helical membrane pass occupies residues 595 to 615 (LLLIALSLLGIAFVLAIGIIF). Topologically, residues 616-630 (TRNLKTPVVKSSGGL) are cytoplasmic. The chain crosses the membrane as a helical span at residues 631–651 (VVCYVMLICHALNFASTGFFI). Over 652–669 (GEPQDFACKTRQTLFGVS) the chain is Extracellular. Residues 670 to 690 (FTLCVSCILTKSLKILLAFSF) form a helical membrane-spanning segment. The Cytoplasmic segment spans residues 691-706 (DPKLTMFLKCLYRPVP). A helical transmembrane segment spans residues 707–727 (IVLTCTGIQVVICTLWLVLAA). The Extracellular portion of the chain corresponds to 728–750 (PSVEENISLPRVIILECEEGSAL). A helical transmembrane segment spans residues 751-771 (AFGTMLGYITVLAFICFVFAF). Over 772–784 (KGRKLPENYNEAK) the chain is Cytoplasmic. A helical membrane pass occupies residues 785-805 (FLTFGMLIYFIAWITFIPVYT). Residues 806–812 (TTFGKYL) lie on the Extracellular side of the membrane. The helical transmembrane segment at 813-833 (PAVEIIVILISNYGILCCIFF) threads the bilayer. The Cytoplasmic segment spans residues 834 to 928 (PKCYIILCKQ…TLRQKRSSSI (95 aa)).

The protein belongs to the G-protein coupled receptor 3 family. As to quaternary structure, homodimer; disulfide-linked. N-glycosylated. As to expression, expressed at high level in liver, lung, spleen and heart. Expressed at lower level in kidney, skeletal muscle and brain. Expressed in 7 dpc, 11 dpc, 15 dpc and 17 dpc embryos.

It is found in the cell membrane. Functionally, receptor activated by multiple ligands, including osteocalcin (BGLAP), basic amino acids, and various cations. Activated by amino acids with a preference for basic amino acids such as L-Lys, L-Arg and L-ornithine but also by small and polar amino acids. The L-alpha amino acids respond is augmented by divalent cations Ca(2+) and Mg(2+). Seems to act through a G(q)/G(11) and G(i)-coupled pathway. Regulates testosterone production by acting as a ligand for uncarboxylated osteocalcin hormone: osteocalcin-binding at the surface of Leydig cells initiates a signaling response that promotes the expression of enzymes required for testosterone synthesis in a CREB-dependent manner. Mediates the non-genomic effects of androgens in multiple tissue. May coordinate nutritional and hormonal anabolic signals through the sensing of extracellular amino acids, osteocalcin, divalent ions and its responsiveness to anabolic steroids. The chain is G-protein coupled receptor family C group 6 member A (Gprc6a) from Mus musculus (Mouse).